The primary structure comprises 315 residues: Calumenin (315 aa).

The first 19 residues, M1–S19, serve as a signal peptide directing secretion. Phosphoserine is present on S44. Y47 is subject to Phosphotyrosine. The residue at position 65 (T65) is a Phosphothreonine. EF-hand domains are found at residues E68–R103, W104–D139, Q151–D186, M188–N223, W229–D264, and H265–S300. S69 carries the post-translational modification Phosphoserine; by FAM20C. Ca(2+)-binding residues include D81, D83, D85, E92, D117, N119, D121, and E128. A glycan (N-linked (GlcNAc...) (complex) asparagine) is linked at N131. Residue D164 participates in Ca(2+) binding. K165 bears the N6-acetyllysine mark. Ca(2+) is bound by residues D166, D168, E175, D201, N203, D205, E212, D242, N244, D246, K248, and E253. T254 bears the Phosphothreonine mark. S261 and S277 each carry phosphoserine. 5 residues coordinate Ca(2+): D278, N280, D282, K284, and E289. The Prevents secretion from ER signature appears at H312–F315.

The protein belongs to the CREC family. As to quaternary structure, interacts with GGCX. In terms of tissue distribution, ubiquitously expressed. Expressed at high levels in heart, placenta and skeletal muscle, at lower levels in lung, kidney and pancreas and at very low levels in brain and liver.

It localises to the endoplasmic reticulum membrane. It is found in the golgi apparatus. Its subcellular location is the secreted. The protein resides in the melanosome. The protein localises to the sarcoplasmic reticulum lumen. Involved in regulation of vitamin K-dependent carboxylation of multiple N-terminal glutamate residues. Seems to inhibit gamma-carboxylase GGCX. Binds 7 calcium ions with a low affinity. The polypeptide is Calumenin (CALU) (Homo sapiens (Human)).